The primary structure comprises 308 residues: Carbonic anhydrase 4 (308 aa).

An N-terminal signal peptide occupies residues 1-18; it reads MQLLFALLALGALRPLAG. In terms of domain architecture, Alpha-carbonic anhydrase spans 21–281; the sequence is LHWCYEIQAS…LGDRSVFKSQ (261 aa). 2 disulfides stabilise this stretch: cysteine 24-cysteine 34 and cysteine 44-cysteine 225. Asparagine 31 is a glycosylation site (N-linked (GlcNAc...) asparagine). The active-site Proton donor/acceptor is the histidine 86. Histidine 113, histidine 115, and histidine 138 together coordinate Zn(2+). Asparagine 192 carries an N-linked (GlcNAc...) asparagine glycan. Residue 221–222 participates in substrate binding; the sequence is TT. Serine 280 is lipidated: GPI-anchor amidated serine. Residues 281–308 constitute a propeptide, removed in mature form; it reads QAAGQLLPLPLPTLLVPTLACVMAGLLR.

Belongs to the alpha-carbonic anhydrase family. In terms of assembly, interacts with SLC4A4. The cofactor is Zn(2+).

Its subcellular location is the cell membrane. The catalysed reaction is hydrogencarbonate + H(+) = CO2 + H2O. Its activity is regulated as follows. Inhibited by acetazolamide. In terms of biological role, catalyzes the reversible hydration of carbon dioxide into bicarbonate and protons and thus is essential to maintaining intracellular and extracellular pH. May stimulate the sodium/bicarbonate transporter activity of SLC4A4 that acts in pH homeostasis. It is essential for acid overload removal from the retina and retina epithelium, and acid release in the choriocapillaris in the choroid. The sequence is that of Carbonic anhydrase 4 (CA4) from Oryctolagus cuniculus (Rabbit).